Consider the following 874-residue polypeptide: Probable inorganic carbon transporter subunit DabA (874 aa).

Zn(2+)-binding residues include C398, D400, H580, and C595.

The protein belongs to the inorganic carbon transporter (TC 9.A.2) DabA family. Forms a complex with DabB. The cofactor is Zn(2+).

Its subcellular location is the cell membrane. Its function is as follows. Part of an energy-coupled inorganic carbon pump. This is Probable inorganic carbon transporter subunit DabA from Bacillus cereus (strain AH187).